We begin with the raw amino-acid sequence, 361 residues long: Glutamate 5-kinase (361 aa).

Residue Lys7 coordinates ATP. Substrate contacts are provided by Ser47, Asp134, and Asn146. Residues Thr166–Asp167 and Thr209–Lys215 each bind ATP. One can recognise a PUA domain in the interval Leu274 to Asn345.

It belongs to the glutamate 5-kinase family.

Its subcellular location is the cytoplasm. The catalysed reaction is L-glutamate + ATP = L-glutamyl 5-phosphate + ADP. Its pathway is amino-acid biosynthesis; L-proline biosynthesis; L-glutamate 5-semialdehyde from L-glutamate: step 1/2. Functionally, catalyzes the transfer of a phosphate group to glutamate to form L-glutamate 5-phosphate. In Prochlorococcus marinus (strain MIT 9313), this protein is Glutamate 5-kinase.